A 218-amino-acid chain; its full sequence is Glutathione S-transferase Y1 (218 aa).

Positions 2-88 (PMILGYWNVR…YIARKHNLCG (87 aa)) constitute a GST N-terminal domain. Residues 7-8 (YW), 46-50 (WLNEK), 59-60 (NL), and 72-73 (QS) each bind glutathione. The region spanning 90 to 208 (TEEERIRVDI…KTSRFLRRPI (119 aa)) is the GST C-terminal domain. Y116 contributes to the substrate binding site.

The protein belongs to the GST superfamily. Mu family. In terms of assembly, homodimer.

Its subcellular location is the cytoplasm. The catalysed reaction is RX + glutathione = an S-substituted glutathione + a halide anion + H(+). In terms of biological role, conjugation of reduced glutathione to a wide number of exogenous and endogenous hydrophobic electrophiles. The sequence is that of Glutathione S-transferase Y1 from Cricetulus longicaudatus (Long-tailed dwarf hamster).